A 231-amino-acid chain; its full sequence is Cytidylate kinase 1 (231 aa).

Position 7-15 (7-15 (GPSGAGKGT)) interacts with ATP.

Belongs to the cytidylate kinase family. Type 1 subfamily.

The protein localises to the cytoplasm. It catalyses the reaction CMP + ATP = CDP + ADP. The catalysed reaction is dCMP + ATP = dCDP + ADP. This is Cytidylate kinase 1 from Haemophilus influenzae (strain ATCC 51907 / DSM 11121 / KW20 / Rd).